We begin with the raw amino-acid sequence, 196 residues long: Serine recombinase PinR (196 aa).

The 141-residue stretch at 3 to 143 (RIFAYCRIST…SGIVRARGAG (141 aa)) folds into the Resolvase/invertase-type recombinase catalytic domain. The active-site O-(5'-phospho-DNA)-serine intermediate is serine 11.

This sequence belongs to the site-specific recombinase resolvase family.

The polypeptide is Serine recombinase PinR (pinR) (Escherichia coli (strain K12)).